We begin with the raw amino-acid sequence, 481 residues long: Cysteine--tRNA ligase (481 aa).

Cysteine 27 provides a ligand contact to Zn(2+). The short motif at 29 to 39 (PTVYNYAHIGN) is the 'HIGH' region element. Cysteine 222, histidine 247, and glutamate 251 together coordinate Zn(2+). The short motif at 279-283 (KMSKS) is the 'KMSKS' region element. Lysine 282 provides a ligand contact to ATP.

The protein belongs to the class-I aminoacyl-tRNA synthetase family. Monomer. Zn(2+) serves as cofactor.

The protein localises to the cytoplasm. The enzyme catalyses tRNA(Cys) + L-cysteine + ATP = L-cysteinyl-tRNA(Cys) + AMP + diphosphate. The sequence is that of Cysteine--tRNA ligase from Borrelia hermsii (strain HS1 / DAH).